The sequence spans 589 residues: Pentalenolactone D synthase (589 aa).

Residues 60–61 (IG), 82–83 (DE), 90–91 (TW), 102–103 (DV), Y108, V152, and M491 each bind FAD.

Belongs to the FAD-binding monooxygenase family. Requires FAD as cofactor.

It carries out the reaction 1-deoxy-11-oxopentalenate + NADPH + O2 + H(+) = pentalenolactone D + NADP(+) + H2O. The protein operates within antibiotic biosynthesis; pentalenolactone biosynthesis. In terms of biological role, catalyzes the flavin-dependent Baeyer-Villiger oxidation of 1-deoxy-11-oxopentalenic acid to pentalenolactone D in the biosynthesis of pentalenolactone antibiotic. The polypeptide is Pentalenolactone D synthase (pntE) (Streptomyces arenae).